Here is a 1609-residue protein sequence, read N- to C-terminus: Probable cation-transporting ATPase I (1609 aa).

10 helical membrane passes run 30–50 (GAVNTMQMLASPVAEFAWPVV), 176–196 (LAILMPLTAAVMDLVALSAAV), 238–258 (IALSITTAAASGLTQAVGTPL), 357–377 (LIAAASALLAGGGTEDAAGAI), 641–661 (VHLAQGGTTLAGLLLITASAG), 673–693 (WFSPVNAAAATALVTGVVSAS), 778–798 (ILAVGAAASAIVGSNIDALLV), 921–941 (LFEGSAIVAGHARAIVVATGV), 969–989 (TSKVLPLTLAGGAAVTGLALL), and 997–1017 (AVADGVAIAVAAVPEGLPLVA). Aspartate 1053 acts as the 4-aspartylphosphate intermediate in catalysis. Positions 1335 and 1339 each coordinate Mg(2+). 2 helical membrane passes run 1396-1416 (ILVGGNVGEVVFTIIGTVFGA) and 1426-1446 (LLLVNLLTDMFPALSIAVTSQ). Residues 1447–1476 (YEEPGEDEYQTDEEADEARRTHQHEVLTGP) form a disordered region. A compositionally biased stretch (acidic residues) spans 1449–1462 (EPGEDEYQTDEEAD). 2 consecutive transmembrane segments (helical) span residues 1542-1562 (VVATALGSAGVLIGIIQTPVI) and 1573-1593 (PIAWSGVITATAGATAVSVLA).

It belongs to the cation transport ATPase (P-type) (TC 3.A.3) family.

The protein resides in the cell membrane. It carries out the reaction ATP + H2O = ADP + phosphate + H(+). The chain is Probable cation-transporting ATPase I (ctpI) from Mycobacterium leprae (strain TN).